The primary structure comprises 284 residues: uncharacterized protein (284 aa).

The helical transmembrane segment at isoleucine 9–threonine 28 threads the bilayer.

The protein localises to the membrane. This is an uncharacterized protein from Aquifex aeolicus (strain VF5).